The chain runs to 205 residues: Phosphoribosyl-dephospho-CoA transferase (205 aa).

Catalysis depends on residues aspartate 134 and aspartate 136.

It belongs to the MdcG family.

It catalyses the reaction apo-[malonate decarboxylase ACP] + 2'-(5''-triphospho-alpha-D-ribosyl)-3'-dephospho-CoA = holo-[malonate decarboxylase ACP] + diphosphate. In terms of biological role, transfers 2'-(5-triphosphoribosyl)-3'-dephosphocoenzyme-A to the apo-[acyl-carrier-protein] of the malonate decarboxylase to yield holo-[acyl-carrier-protein]. This chain is Phosphoribosyl-dephospho-CoA transferase, found in Klebsiella pneumoniae (strain 342).